Reading from the N-terminus, the 253-residue chain is uncharacterized protein (253 aa).

Ile17, Ser36, Asp62, Asn89, Tyr158, Lys162, Val191, and Thr193 together coordinate NADP(+). Tyr158 functions as the Proton donor in the catalytic mechanism. Catalysis depends on Lys162, which acts as the Lowers pKa of active site Tyr.

Belongs to the short-chain dehydrogenases/reductases (SDR) family.

It is found in the cytoplasm. The protein localises to the nucleus. This is an uncharacterized protein from Schizosaccharomyces pombe (strain 972 / ATCC 24843) (Fission yeast).